The following is a 127-amino-acid chain: Fluoride-specific ion channel FluC 2 (127 aa).

The next 4 helical transmembrane spans lie at 4-24 (IIAITGFAMLGGGLREGLSLL), 31-51 (FWITCLINIVGAFVLSLITNL), 62-82 (IVIGMSVGFVGSFTTFSTFTF), and 94-114 (VLALSYVAASLGLGLLAGLAG). Na(+)-binding residues include Gly-72 and Thr-75.

This sequence belongs to the fluoride channel Fluc/FEX (TC 1.A.43) family.

It is found in the cell membrane. The enzyme catalyses fluoride(in) = fluoride(out). With respect to regulation, na(+) is not transported, but it plays an essential structural role and its presence is essential for fluoride channel function. Functionally, fluoride-specific ion channel. Important for reducing fluoride concentration in the cell, thus reducing its toxicity. The polypeptide is Fluoride-specific ion channel FluC 2 (Lactiplantibacillus plantarum (strain ATCC BAA-793 / NCIMB 8826 / WCFS1) (Lactobacillus plantarum)).